A 527-amino-acid polypeptide reads, in one-letter code: tRNA-2-methylthio-N(6)-dimethylallyladenosine synthase (527 aa).

The disordered stretch occupies residues 1–27; that stretch reads MMNEKQRLQYTAQIETDHPTDKKSALD. The segment covering 15–27 has biased composition (basic and acidic residues); it reads ETDHPTDKKSALD. Residues 84-202 form the MTTase N-terminal domain; it reads RKFYIRTYGC…LPYILKEAYM (119 aa). Cys93, Cys129, Cys163, Cys239, Cys243, and Cys246 together coordinate [4Fe-4S] cluster. The 231-residue stretch at 225–455 folds into the Radical SAM core domain; sequence RKGNIKAWVN…NALVNEISAK (231 aa). Positions 458 to 521 constitute a TRAM domain; that stretch reads KEYEGQVVEV…TWTLNGEMVE (64 aa).

This sequence belongs to the methylthiotransferase family. MiaB subfamily. Monomer. It depends on [4Fe-4S] cluster as a cofactor.

Its subcellular location is the cytoplasm. It carries out the reaction N(6)-dimethylallyladenosine(37) in tRNA + (sulfur carrier)-SH + AH2 + 2 S-adenosyl-L-methionine = 2-methylsulfanyl-N(6)-dimethylallyladenosine(37) in tRNA + (sulfur carrier)-H + 5'-deoxyadenosine + L-methionine + A + S-adenosyl-L-homocysteine + 2 H(+). Catalyzes the methylthiolation of N6-(dimethylallyl)adenosine (i(6)A), leading to the formation of 2-methylthio-N6-(dimethylallyl)adenosine (ms(2)i(6)A) at position 37 in tRNAs that read codons beginning with uridine. The protein is tRNA-2-methylthio-N(6)-dimethylallyladenosine synthase of Anoxybacillus flavithermus (strain DSM 21510 / WK1).